A 301-amino-acid chain; its full sequence is Acetylglutamate kinase (301 aa).

Residues 68 to 69, arginine 90, and asparagine 195 each bind substrate; that span reads GG.

Belongs to the acetylglutamate kinase family. ArgB subfamily.

It localises to the cytoplasm. It carries out the reaction N-acetyl-L-glutamate + ATP = N-acetyl-L-glutamyl 5-phosphate + ADP. It functions in the pathway amino-acid biosynthesis; L-arginine biosynthesis; N(2)-acetyl-L-ornithine from L-glutamate: step 2/4. In terms of biological role, catalyzes the ATP-dependent phosphorylation of N-acetyl-L-glutamate. This Pseudomonas fluorescens (strain Pf0-1) protein is Acetylglutamate kinase.